A 215-amino-acid chain; its full sequence is Kunitz trypsin inhibitor 2 (215 aa).

Positions 1-23 (MKNPSVISFLIILLFAATICTHG) are cleaved as a signal peptide. Cysteines 67 and 114 form a disulfide. A glycan (N-linked (GlcNAc...) asparagine) is linked at asparagine 145.

This sequence belongs to the protease inhibitor I3 (leguminous Kunitz-type inhibitor) family. In terms of assembly, interacts with RD21A. Interacts with RD21B and RD21C. Expressed in vascular bundles of the carpels, the transmitting tract of the style and septum epidermis. Expressed in etiolated seedlings.

The protein resides in the secreted. The protein localises to the cell wall. It is found in the extracellular space. It localises to the apoplast. Its subcellular location is the endoplasmic reticulum. In terms of biological role, water-soluble and chlorophyll-binding protein that probably does not function as a chloroplast chlorophyll carrier and is not involved in photosynthesis. Involved in the control of cell death in the transmitting tract and septum epidermis during flower development. Binds and inhibits the activity of the cysteine protease RD21A as a pro-death protein. May play a role in herbivore resistance activation during seedling greening. The protein is Kunitz trypsin inhibitor 2 of Arabidopsis thaliana (Mouse-ear cress).